We begin with the raw amino-acid sequence, 545 residues long: Chaperonin GroEL 1 (545 aa).

Residues 30-33 (TLGP), K51, 87-91 (DGTTT), G415, and D495 contribute to the ATP site.

This sequence belongs to the chaperonin (HSP60) family. In terms of assembly, forms a cylinder of 14 subunits composed of two heptameric rings stacked back-to-back. Interacts with the co-chaperonin GroES.

The protein localises to the cytoplasm. The catalysed reaction is ATP + H2O + a folded polypeptide = ADP + phosphate + an unfolded polypeptide.. Together with its co-chaperonin GroES, plays an essential role in assisting protein folding. The GroEL-GroES system forms a nano-cage that allows encapsulation of the non-native substrate proteins and provides a physical environment optimized to promote and accelerate protein folding. In Rhizobium etli (strain ATCC 51251 / DSM 11541 / JCM 21823 / NBRC 15573 / CFN 42), this protein is Chaperonin GroEL 1.